A 133-amino-acid polypeptide reads, in one-letter code: Ribonuclease VapC10 (133 aa).

A PINc domain is found at I2–Q119. 2 residues coordinate Mg(2+): D5 and D92.

This sequence belongs to the PINc/VapC protein family. Mg(2+) is required as a cofactor.

In terms of biological role, toxic component of a type II toxin-antitoxin (TA) system. An RNase. The cognate antitoxin is VapB10. The sequence is that of Ribonuclease VapC10 from Mycobacterium tuberculosis (strain CDC 1551 / Oshkosh).